The primary structure comprises 448 residues: Fibulin-5 (448 aa).

Positions 1–23 (MPGIKRILTVTILALCLPSPGNA) are cleaved as a signal peptide. In terms of domain architecture, EGF-like 1; calcium-binding spans 42 to 82 (DIDECRTIPEACRGDMMCVNQNGGYLCIPRTNPVYRGPYSN). Intrachain disulfides connect Cys-46–Cys-59, Cys-53–Cys-68, Cys-131–Cys-144, Cys-138–Cys-153, Cys-155–Cys-166, Cys-172–Cys-181, Cys-177–Cys-190, Cys-192–Cys-205, Cys-211–Cys-221, Cys-217–Cys-230, Cys-232–Cys-245, Cys-251–Cys-262, Cys-258–Cys-271, Cys-273–Cys-286, Cys-292–Cys-305, Cys-299–Cys-314, and Cys-320–Cys-332. The Cell attachment site signature appears at 54-56 (RGD). Residues 127 to 167 (DVDECATDSHQCNPTQICINTEGGYTCSCTDGYWLLEGQCL) form the EGF-like 2; calcium-binding domain. Residues 168–206 (DIDECRYGYCQQLCANVPGSYSCTCNPGFTLNEDGRSCQ) enclose the EGF-like 3; calcium-binding domain. In terms of domain architecture, EGF-like 4; calcium-binding spans 207-246 (DVNECATENPCVQTCVNTYGSFICRCDPGYELEEDGVHCS). An interaction with LOXL1 region spans residues 245–448 (CSDMDECSFS…LRIYVSQYPF (204 aa)). In terms of domain architecture, EGF-like 5; calcium-binding spans 247-287 (DMDECSFSEFLCQHECVNQPGTYFCSCPPGYILLDDNRSCQ). N-linked (GlcNAc...) asparagine glycosylation is found at Asn-283 and Asn-296. An EGF-like 6; calcium-binding domain is found at 288–333 (DINECEHRNHTCNLQQTCYNLQGGFKCIDPIRCEEPYLRISDNRCM).

It belongs to the fibulin family. As to quaternary structure, homodimer. Monomer, homodimerizes in presence of Ca(2+). Interacts with ELN. Interacts (via N-terminus) with the integrins ITGAV/ITGB3, ITGAV/ITGB5 and ITGA9/ITGB1. Interacts with FBN1 (via N-terminal domain). Forms a ternary complex with ELN and FBN1. Interacts with EFEMP2 with moderate affinity. Interacts with LOXL1. N-glycosylated. Expressed in skin fibroblasts (at protein level). Expressed predominantly in heart, ovary, and colon but also in kidney, pancreas, testis, lung and placenta. Not detectable in brain, liver, thymus, prostate, or peripheral blood leukocytes.

It is found in the secreted. Its subcellular location is the extracellular space. The protein localises to the extracellular matrix. Essential for elastic fiber formation, is involved in the assembly of continuous elastin (ELN) polymer and promotes the interaction of microfibrils and ELN. Stabilizes and organizes elastic fibers in the skin, lung and vasculature. Promotes adhesion of endothelial cells through interaction of integrins and the RGD motif. Vascular ligand for integrin receptors which may play a role in vascular development and remodeling. May act as an adapter that mediates the interaction between FBN1 and ELN. The chain is Fibulin-5 (FBLN5) from Homo sapiens (Human).